The chain runs to 132 residues: MSRKRTSPNRNVQIADQIQRDLSELIMREVKDPRIGIVTIQSVELTPDYAHAKVYFTALTGDPDKTQEALNHASGHLHNLLFKRLHIHTVPTLHFHYDQTIEKAVEMSRLIKEANSTRAKDDDEAGAPAKDD.

It belongs to the RbfA family. In terms of assembly, monomer. Binds 30S ribosomal subunits, but not 50S ribosomal subunits or 70S ribosomes.

It localises to the cytoplasm. In terms of biological role, one of several proteins that assist in the late maturation steps of the functional core of the 30S ribosomal subunit. Associates with free 30S ribosomal subunits (but not with 30S subunits that are part of 70S ribosomes or polysomes). Required for efficient processing of 16S rRNA. May interact with the 5'-terminal helix region of 16S rRNA. The sequence is that of Ribosome-binding factor A from Burkholderia cenocepacia (strain ATCC BAA-245 / DSM 16553 / LMG 16656 / NCTC 13227 / J2315 / CF5610) (Burkholderia cepacia (strain J2315)).